The following is a 267-amino-acid chain: Cilia- and flagella-associated protein 300 (267 aa).

This sequence belongs to the CFAP300 family. Interacts with DNAAF2. Expressed in nasal epithelial cells.

The protein localises to the cytoplasm. Its subcellular location is the cytoskeleton. It localises to the cilium axoneme. In terms of biological role, cilium- and flagellum-specific protein that plays a role in axonemal structure organization and motility. May play a role in outer and inner dynein arm assembly. This chain is Cilia- and flagella-associated protein 300, found in Homo sapiens (Human).